A 1407-amino-acid polypeptide reads, in one-letter code: Metabotropic glutamate receptor-like protein P (1407 aa).

At 1–696 the chain is on the extracellular side; that stretch reads MKFKKKNIYW…KTIKVTSFVK (696 aa). Residues N43 and N58 are each glycosylated (N-linked (GlcNAc...) asparagine). 2 PbH1 repeats span residues 93–118 and 129–150; these read ISDIHFKDLTIKNGFGNAISGIFDGG and FVNVALIDNTCSASGGGIFLYN. N162, N179, N182, N230, N241, N270, N368, N391, N464, N512, N539, N544, N554, N571, N627, and N646 each carry an N-linked (GlcNAc...) asparagine glycan. The stretch at 254-279 is one PbH1 3 repeat; that stretch reads ISNVIFESCEFIGNRANSTGGLSFLT. The PbH1 4 repeat unit spans residues 452–476; sequence GYSVYIENCEVKNNTGLFKGCFIDT. The helical transmembrane segment at 697 to 717 threads the bilayer; sequence FLVGTLAAILLIILIISGFIS. At 718–731 the chain is on the cytoplasmic side; it reads LKYRKKRVIRYSNP. Residues 732-752 form a helical membrane-spanning segment; that stretch reads LFLCIILVGCIIFLITIPVLF. The Extracellular portion of the chain corresponds to 753-758; the sequence is GSTSAT. Residues 759–779 form a helical membrane-spanning segment; it reads CKIRFPIIVIGSCLVTSSVFI. Residues 780–806 are Cytoplasmic-facing; it reads KQFRIWRLIKDIQLLRETNVENKYLLK. A helical membrane pass occupies residues 807-827; sequence FISILMVIPIIIVICSFFIFP. Over 828–853 the chain is Extracellular; it reads THEKYTFNQRDITITHYCSDGSYLAY. A helical membrane pass occupies residues 854 to 874; it reads VIIFLVYQMAILLFGCYLVIV. At 875–890 the chain is on the cytoplasmic side; the sequence is CRKFRSIPGTFNEATY. A helical membrane pass occupies residues 891–911; sequence IGILIYNYTVVLIVAIPLAYV. The Extracellular portion of the chain corresponds to 912–919; sequence FNKNPLAN. Residues 920–940 form a helical membrane-spanning segment; the sequence is FLIFSISIIVFVLSTIILLFI. The Cytoplasmic portion of the chain corresponds to 941-1407; it reads PKFHFLLRKK…LSPINLSKRK (467 aa). The segment covering 991-1004 has biased composition (polar residues); sequence QQRQGNLYNNNSLG. Disordered stretches follow at residues 991–1072, 1084–1248, 1267–1351, and 1369–1407; these read QQRQ…DPNF, GKRK…SSIG, KKVK…NFNE, and FHQKKQKDSDNRKNYNISPINISDEKVPPLSPINLSKRK. The segment covering 1005–1029 has biased composition (low complexity); the sequence is RSISSNTRKRSNNNINNNNNNNSFN. The segment covering 1030 to 1040 has biased composition (polar residues); it reads MTGFSDSSSTI. A compositionally biased stretch (low complexity) spans 1041–1071; sequence SNPNLTSFTSSPSSLNSSSDSDSTPDFNDPN. Residues 1084-1093 show a composition bias toward basic and acidic residues; it reads GKRKSIEKNK. 3 stretches are compositionally biased toward low complexity: residues 1099–1147, 1154–1246, and 1276–1339; these read PNSP…NTPI, SSKT…SDSS, and SDST…NNNN. Residues 1315–1344 adopt a coiled-coil conformation; that stretch reads NNNNNNNNNNNNNINNNNNNANNNNSDTDD.

The protein belongs to the G-protein coupled receptor 3 family. GABA-B receptor subfamily.

The protein localises to the membrane. This chain is Metabotropic glutamate receptor-like protein P (grlP), found in Dictyostelium discoideum (Social amoeba).